A 625-amino-acid chain; its full sequence is Putative surface protein bspA-like (625 aa).

At 1–548 the chain is on the extracellular side; the sequence is MMTPGKSSKT…KAIKGGEIAG (548 aa). Asparagine 15 is a glycosylation site (N-linked (GlcNAc...) asparagine). 13 LRR repeats span residues 38–60, 61–83, 85–106, 107–129, 153–175, 176–198, 200–221, 222–245, 247–267, 271–293, 325–347, 348–368, and 369–392; these read CSSF…AFTG, CSSL…AFSE, SSIT…AFSG, CSKL…AFRG, CSSL…AFYG, CSSL…AFQE, SKLT…AFKR, CSSL…FYEC, KLTS…AFSK, LTSI…VFLN, IPKS…TLTH, FTNL…PESF, and IEGD…AFKD. The N-linked (GlcNAc...) asparagine glycan is linked to asparagine 227. The interval 439–538 is disordered; the sequence is KQSEENPNQP…TDDPSKSKEN (100 aa). The segment covering 443 to 526 has biased composition (low complexity); the sequence is ENPNQPGENP…QPGENPSQPG (84 aa). A helical transmembrane segment spans residues 549-571; sequence IIIGSLIGICLVVAICFGVYYYF. Over 572–625 the chain is Cytoplasmic; it reads MRIKPKNKNDDNEGNQEDTIANGTNEVTNENVLATFDEQPNNESDSNGLDSAEV. The segment at 577–625 is disordered; it reads KNKNDDNEGNQEDTIANGTNEVTNENVLATFDEQPNNESDSNGLDSAEV. Over residues 588–625 the composition is skewed to polar residues; it reads EDTIANGTNEVTNENVLATFDEQPNNESDSNGLDSAEV.

Its subcellular location is the cell membrane. Its function is as follows. May bind host tissue. This Trichomonas vaginalis protein is Putative surface protein bspA-like (BSPAL1).